The chain runs to 141 residues: Hemoglobin subunit alpha (141 aa).

Residues valine 1–arginine 141 form the Globin domain. A Phosphoserine modification is found at serine 3. Lysine 7 bears the N6-succinyllysine mark. Threonine 8 carries the post-translational modification Phosphothreonine. N6-succinyllysine is present on lysine 11. Tyrosine 24 bears the Phosphotyrosine mark. Phosphoserine is present on serine 35. Lysine 40 is modified (N6-succinyllysine). Serine 49 carries the post-translational modification Phosphoserine. Histidine 58 serves as a coordination point for O2. Histidine 87 serves as a coordination point for heme b. Serine 102 carries the post-translational modification Phosphoserine. Threonine 108 carries the phosphothreonine modification. A Phosphoserine modification is found at serine 124. Phosphothreonine is present on residues threonine 134 and threonine 137. Serine 138 carries the phosphoserine modification.

It belongs to the globin family. As to quaternary structure, heterotetramer of two alpha chains and two beta chains. Red blood cells.

In terms of biological role, involved in oxygen transport from the lung to the various peripheral tissues. Hemopressin acts as an antagonist peptide of the cannabinoid receptor CNR1. Hemopressin-binding efficiently blocks cannabinoid receptor CNR1 and subsequent signaling. In Rhinoceros unicornis (Greater Indian rhinoceros), this protein is Hemoglobin subunit alpha (HBA).